Consider the following 181-residue polypeptide: Shikimate kinase 2 (181 aa).

12–17 contacts ATP; sequence GCGKTT. Residues Thr16 and Asp32 each coordinate Mg(2+). Substrate-binding residues include Asp34, Arg58, and Gly79. Positions 112–126 are LID domain; the sequence is EAEPEADLRPTLTGK. ATP is bound at residue Arg120. A substrate-binding site is contributed by Arg139.

This sequence belongs to the shikimate kinase family. AroL subfamily. Monomer. Mg(2+) serves as cofactor.

It is found in the cytoplasm. It catalyses the reaction shikimate + ATP = 3-phosphoshikimate + ADP + H(+). It participates in metabolic intermediate biosynthesis; chorismate biosynthesis; chorismate from D-erythrose 4-phosphate and phosphoenolpyruvate: step 5/7. Its function is as follows. Catalyzes the specific phosphorylation of the 3-hydroxyl group of shikimic acid using ATP as a cosubstrate. This is Shikimate kinase 2 from Salmonella heidelberg (strain SL476).